We begin with the raw amino-acid sequence, 605 residues long: MKRKLDANDVPSPEAADKKEKKEEDDADFESLNLDPRLRQALIKEKFTKPTLVQAKAIPLALEGKDILARAKTGSGKTAAYVLPILQTILQKKATDPSFKATTGLILVPTRELAEQVQNVVTTFAAFCGKDVRSVNLTQKVSDAVQRTMLADYPDLVVSTPARVVTNLGSSALSLENLTHLVIDEADLVLSYGYEEDINALAKAIPRGVQTFLMSATLTDEVDTLKGLFCRSPVTLKLEDKDDQGAGVSQFVVRCAEDEKFLLTYVIFKLQLIKGKVIIFVDDVDRCYRVKLFLEQFGIKSCVLNSELPINSRIHVVQEFNKGVYDILIAADEQEVIGARKSKKSKETEEAGSSDEDEGEPEDKSKRRKVSGKEKDYGISRGIDFQNVACVLNFDLPSTSKSYTHRIGRTGRAGKTGMALSFVIPKDQHGKHRPTSTATSKHDESVLAKIVKRQGKLGHEVKPYHFEMKQVEAFRYRMTDALRAVTRLAVQEARAREIRQELIKSEKLKRHFEENPEELRQLRHDDELRSARVQPHLKHIPEYLMPAKGKKGLSSGDVGFVSFRKQNENRIRKAREKNRGKGNGRKFAGVKKKVDPLKTFNRGRK.

The tract at residues 1–30 (MKRKLDANDVPSPEAADKKEKKEEDDADFE) is disordered. Residues 15 to 24 (AADKKEKKEE) are compositionally biased toward basic and acidic residues. The Q motif signature appears at 27–55 (ADFESLNLDPRLRQALIKEKFTKPTLVQA). A Helicase ATP-binding domain is found at 58–236 (IPLALEGKDI…GLFCRSPVTL (179 aa)). 71-78 (AKTGSGKT) is a binding site for ATP. The DEAD box signature appears at 184–187 (DEAD). One can recognise a Helicase C-terminal domain in the interval 247–469 (GVSQFVVRCA…EVKPYHFEMK (223 aa)). Disordered stretches follow at residues 339 to 373 (ARKS…VSGK) and 564 to 605 (RKQN…RGRK). Over residues 350 to 361 (EAGSSDEDEGEP) the composition is skewed to acidic residues. Positions 572–591 (RKAREKNRGKGNGRKFAGVK) are enriched in basic residues.

This sequence belongs to the DEAD box helicase family. DDX56/DBP9 subfamily.

It localises to the nucleus. It is found in the nucleolus. The enzyme catalyses ATP + H2O = ADP + phosphate + H(+). ATP-binding RNA helicase involved in the biogenesis of 60S ribosomal subunits and is required for the normal formation of 25S and 5.8S rRNAs. This chain is ATP-dependent RNA helicase dbp9 (dbp9), found in Aspergillus oryzae (strain ATCC 42149 / RIB 40) (Yellow koji mold).